Here is a 185-residue protein sequence, read N- to C-terminus: Elongation factor P (185 aa).

The protein belongs to the elongation factor P family.

Its subcellular location is the cytoplasm. It functions in the pathway protein biosynthesis; polypeptide chain elongation. In terms of biological role, involved in peptide bond synthesis. Stimulates efficient translation and peptide-bond synthesis on native or reconstituted 70S ribosomes in vitro. Probably functions indirectly by altering the affinity of the ribosome for aminoacyl-tRNA, thus increasing their reactivity as acceptors for peptidyl transferase. The polypeptide is Elongation factor P (Herpetosiphon aurantiacus (strain ATCC 23779 / DSM 785 / 114-95)).